A 326-amino-acid chain; its full sequence is MASSYRINCSTLLHLLMFLSSLLTSSANLSFNFYASSCSVAEFLVRNTVRSATSSDPTIPGKLLRLFFHDCFVQGCDASVLIQGNSTEKSDPGNASLGGFSVIDTAKNAIENLCPATVSCADIVALAARDAVEAAGGPVVEIPTGRRDGKESMAANVRPNIIDTDFTLDQMIDAFSSKGLSIQDLVVLSGAHTIGASHCNAFNGRFQRDSKGNFEVIDASLDNSYAETLMNKCSSSESSSLTVSNDPETSAVFDNQYYRNLETHKGLFQTDSALMEDNRTRTMVEELASDEESFFQRWSESFVKLSMVGVRVGEDGEIRRSCSSVN.

A signal peptide spans 1–27 (MASSYRINCSTLLHLLMFLSSLLTSSA). A glycan (N-linked (GlcNAc...) asparagine) is linked at Asn28. Cystine bridges form between Cys38–Cys114, Cys71–Cys76, Cys120–Cys322, and Cys199–Cys233. His69 serves as the catalytic Proton acceptor. Asp70, Val73, Gly75, Asp77, and Ser79 together coordinate Ca(2+). Asn85 is a glycosylation site (N-linked (GlcNAc...) asparagine). Position 192 (His192) interacts with heme b. A Ca(2+)-binding site is contributed by Thr193. 3 residues coordinate Ca(2+): Asp246, Thr249, and Asp254. Asn278 carries an N-linked (GlcNAc...) asparagine glycan.

Belongs to the peroxidase family. Classical plant (class III) peroxidase subfamily. Heme b serves as cofactor. Ca(2+) is required as a cofactor.

It localises to the secreted. It catalyses the reaction 2 a phenolic donor + H2O2 = 2 a phenolic radical donor + 2 H2O. Its function is as follows. Removal of H(2)O(2), oxidation of toxic reductants, biosynthesis and degradation of lignin, suberization, auxin catabolism, response to environmental stresses such as wounding, pathogen attack and oxidative stress. These functions might be dependent on each isozyme/isoform in each plant tissue. This Arabidopsis thaliana (Mouse-ear cress) protein is Peroxidase 46 (PER46).